Reading from the N-terminus, the 249-residue chain is Pyridoxine 5'-phosphate synthase (249 aa).

N7 is a binding site for 3-amino-2-oxopropyl phosphate. Residue 9–10 (DH) coordinates 1-deoxy-D-xylulose 5-phosphate. R18 is a binding site for 3-amino-2-oxopropyl phosphate. H43 functions as the Proton acceptor in the catalytic mechanism. 1-deoxy-D-xylulose 5-phosphate-binding residues include R45 and H50. The Proton acceptor role is filled by E70. T100 is a binding site for 1-deoxy-D-xylulose 5-phosphate. Residue H190 is the Proton donor of the active site. 3-amino-2-oxopropyl phosphate-binding positions include G191 and 212-213 (GH).

It belongs to the PNP synthase family. In terms of assembly, homooctamer; tetramer of dimers.

The protein localises to the cytoplasm. It carries out the reaction 3-amino-2-oxopropyl phosphate + 1-deoxy-D-xylulose 5-phosphate = pyridoxine 5'-phosphate + phosphate + 2 H2O + H(+). It participates in cofactor biosynthesis; pyridoxine 5'-phosphate biosynthesis; pyridoxine 5'-phosphate from D-erythrose 4-phosphate: step 5/5. Functionally, catalyzes the complicated ring closure reaction between the two acyclic compounds 1-deoxy-D-xylulose-5-phosphate (DXP) and 3-amino-2-oxopropyl phosphate (1-amino-acetone-3-phosphate or AAP) to form pyridoxine 5'-phosphate (PNP) and inorganic phosphate. This chain is Pyridoxine 5'-phosphate synthase, found in Synechococcus sp. (strain CC9311).